Consider the following 312-residue polypeptide: MSKEWIEVSIIVSSEAVEAVSGILYNTEVEGISIEDTKDIEFKKKHPGDWDYFDESLLKVEEGAVIKAYYRESESFYGYLKYIRHNINNLENLGIDKGKGLVVVNKVNEEDWENGWKKYYKPYRAGEKIVIKPLWEEYENKKQDIVVEIDPGMAFGTGTHETTKMCIKALEKYVRPESNVFDIGTGSGILAIAASKLGAKEVTAVDLDPVAVESALKNISYNNIKNIKVFHGNLMEGVHGKADILVINIIADVILSLTEEVKKFLVSEGIFISSGIIIDRKEEVVENLQNNGFCIREINEDGEWVCIVSTIK.

S-adenosyl-L-methionine contacts are provided by T163, G184, D206, and N248.

The protein belongs to the methyltransferase superfamily. PrmA family.

It is found in the cytoplasm. It catalyses the reaction L-lysyl-[protein] + 3 S-adenosyl-L-methionine = N(6),N(6),N(6)-trimethyl-L-lysyl-[protein] + 3 S-adenosyl-L-homocysteine + 3 H(+). In terms of biological role, methylates ribosomal protein L11. In Clostridium kluyveri (strain NBRC 12016), this protein is Ribosomal protein L11 methyltransferase.